The primary structure comprises 433 residues: 23S rRNA (uracil(1939)-C(5))-methyltransferase RlmD (433 aa).

Residues 10 to 68 form the TRAM domain; that stretch reads RTTTRQIITVSVNDLDSFGQGVARHNGKTLFIPGLLPQENAEVAVTEDKKQYARAKVVR. Positions 81, 87, 90, and 162 each coordinate [4Fe-4S] cluster. Glutamine 265, phenylalanine 294, asparagine 299, glutamate 315, asparagine 342, and aspartate 363 together coordinate S-adenosyl-L-methionine. Cysteine 389 acts as the Nucleophile in catalysis.

The protein belongs to the class I-like SAM-binding methyltransferase superfamily. RNA M5U methyltransferase family. RlmD subfamily.

The enzyme catalyses uridine(1939) in 23S rRNA + S-adenosyl-L-methionine = 5-methyluridine(1939) in 23S rRNA + S-adenosyl-L-homocysteine + H(+). Its function is as follows. Catalyzes the formation of 5-methyl-uridine at position 1939 (m5U1939) in 23S rRNA. The protein is 23S rRNA (uracil(1939)-C(5))-methyltransferase RlmD of Shigella flexneri serotype 5b (strain 8401).